Reading from the N-terminus, the 203-residue chain is Putative 3-methyladenine DNA glycosylase (203 aa).

Belongs to the DNA glycosylase MPG family.

The sequence is that of Putative 3-methyladenine DNA glycosylase from Clostridium botulinum (strain ATCC 19397 / Type A).